The chain runs to 158 residues: Endoribonuclease YbeY (158 aa).

Zn(2+) is bound by residues histidine 124, histidine 128, and histidine 134.

Belongs to the endoribonuclease YbeY family. Zn(2+) is required as a cofactor.

The protein resides in the cytoplasm. In terms of biological role, single strand-specific metallo-endoribonuclease involved in late-stage 70S ribosome quality control and in maturation of the 3' terminus of the 16S rRNA. The chain is Endoribonuclease YbeY from Caldicellulosiruptor saccharolyticus (strain ATCC 43494 / DSM 8903 / Tp8T 6331).